Here is an 89-residue protein sequence, read N- to C-terminus: Small ribosomal subunit protein uS15 (89 aa).

It belongs to the universal ribosomal protein uS15 family. Part of the 30S ribosomal subunit. Forms a bridge to the 50S subunit in the 70S ribosome, contacting the 23S rRNA.

In terms of biological role, one of the primary rRNA binding proteins, it binds directly to 16S rRNA where it helps nucleate assembly of the platform of the 30S subunit by binding and bridging several RNA helices of the 16S rRNA. Its function is as follows. Forms an intersubunit bridge (bridge B4) with the 23S rRNA of the 50S subunit in the ribosome. The chain is Small ribosomal subunit protein uS15 from Chlorobaculum parvum (strain DSM 263 / NCIMB 8327) (Chlorobium vibrioforme subsp. thiosulfatophilum).